We begin with the raw amino-acid sequence, 36 residues long: Photosystem I reaction center subunit VIII (36 aa).

Residues 6 to 28 (LPSIFVPLIGLFFPAIAMASLFL) form a helical membrane-spanning segment.

The protein belongs to the PsaI family.

It is found in the plastid. The protein resides in the chloroplast thylakoid membrane. Its function is as follows. May help in the organization of the PsaL subunit. The protein is Photosystem I reaction center subunit VIII of Amborella trichopoda.